A 485-amino-acid polypeptide reads, in one-letter code: E-selectin (485 aa).

The signal sequence occupies residues 1–22 (MIVSQYLSALTFVLLLFKESRT). The C-type lectin domain maps to 23–140 (WSYHASTEMM…CTKQKLALCY (118 aa)). Topologically, residues 23 to 430 (WSYHASTEMM…CEAPTVSQTP (408 aa)) are extracellular. Disulfide bonds link cysteine 41-cysteine 139, cysteine 112-cysteine 131, cysteine 144-cysteine 155, cysteine 149-cysteine 164, cysteine 166-cysteine 175, cysteine 181-cysteine 224, cysteine 194-cysteine 206, cysteine 210-cysteine 237, cysteine 242-cysteine 286, cysteine 255-cysteine 268, cysteine 272-cysteine 299, cysteine 304-cysteine 349, cysteine 335-cysteine 362, cysteine 367-cysteine 408, and cysteine 394-cysteine 421. 3 N-linked (GlcNAc...) asparagine glycosylation sites follow: asparagine 61, asparagine 79, and asparagine 88. Ca(2+)-binding residues include glutamate 102, asparagine 104, and glutamate 110. A carbohydrate-binding positions include 102–110 (EPNNKQSDE), 114–119 (EIYIKR), and 127–129 (NDE). Residues asparagine 127 and aspartate 128 each contribute to the Ca(2+) site. The 36-residue stretch at 141–176 (KAACNPTPCGSHGECVETINNYTCQCHPGFKGLKCE) folds into the EGF-like domain. The N-linked (GlcNAc...) asparagine glycan is linked to asparagine 161. Sushi domains are found at residues 179 to 239 (VTCP…KCNV), 240 to 301 (VKCD…TCKA), 302 to 364 (VSCA…VCEV), and 365 to 423 (VRCS…TCEA). Asparagine 203 carries N-linked (GlcNAc...) asparagine glycosylation. Asparagine 265 is a glycosylation site (N-linked (GlcNAc...) asparagine). N-linked (GlcNAc...) asparagine glycans are attached at residues asparagine 312 and asparagine 316. Residues asparagine 379 and asparagine 401 are each glycosylated (N-linked (GlcNAc...) asparagine). Residues 431–453 (LAVGLSTAGVSLVTIPSFLFWLL) traverse the membrane as a helical segment. Residues 454-485 (KRLQKKAKKFSPASSCSSLKSNGCYSTPSKLI) lie on the Cytoplasmic side of the membrane. Residues 466 to 485 (ASSCSSLKSNGCYSTPSKLI) form a disordered region.

Belongs to the selectin/LECAM family. As to quaternary structure, interacts with SELPLG/PSGL1 and PODXL2 through the sialyl Lewis X epitope. SELPLG sulfation appears not to be required for this interaction.

It localises to the cell membrane. Functionally, cell-surface glycoprotein having a role in immunoadhesion. Mediates in the adhesion of blood neutrophils in cytokine-activated endothelium through interaction with SELPLG/PSGL1. May have a role in capillary morphogenesis. The chain is E-selectin (SELE) from Bos taurus (Bovine).